The primary structure comprises 225 residues: Uracil-DNA glycosylase (225 aa).

The Proton acceptor role is filled by Asp-65.

Belongs to the uracil-DNA glycosylase (UDG) superfamily. UNG family.

It is found in the cytoplasm. It catalyses the reaction Hydrolyzes single-stranded DNA or mismatched double-stranded DNA and polynucleotides, releasing free uracil.. Excises uracil residues from the DNA which can arise as a result of misincorporation of dUMP residues by DNA polymerase or due to deamination of cytosine. This chain is Uracil-DNA glycosylase, found in Bacillus anthracis (strain A0248).